The chain runs to 287 residues: Pyridoxal kinase PdxY (287 aa).

Substrate is bound by residues S9 and 44–45 (TQ). ATP is bound by residues D111, E147, and K180. A substrate-binding site is contributed by D221.

The protein belongs to the pyridoxine kinase family. PdxY subfamily. Homodimer. It depends on Mg(2+) as a cofactor.

It catalyses the reaction pyridoxal + ATP = pyridoxal 5'-phosphate + ADP + H(+). Its pathway is cofactor metabolism; pyridoxal 5'-phosphate salvage; pyridoxal 5'-phosphate from pyridoxal: step 1/1. Pyridoxal kinase involved in the salvage pathway of pyridoxal 5'-phosphate (PLP). Catalyzes the phosphorylation of pyridoxal to PLP. The polypeptide is Pyridoxal kinase PdxY (Paraburkholderia phymatum (strain DSM 17167 / CIP 108236 / LMG 21445 / STM815) (Burkholderia phymatum)).